The chain runs to 169 residues: Cell division inhibitor SulA (169 aa).

Positions Met1–Ser16 are enriched in polar residues. The disordered stretch occupies residues Met1–Pro20. Residues Ala106 to Tyr112 are ftsZ binding. Positions Lys162–His169 are lon protease binding.

This sequence belongs to the SulA family. In terms of assembly, interacts with FtsZ. Post-translationally, is rapidly cleaved and degraded by the Lon protease once DNA damage is repaired.

Its function is as follows. Component of the SOS system and an inhibitor of cell division. Accumulation of SulA causes rapid cessation of cell division and the appearance of long, non-septate filaments. In the presence of GTP, binds a polymerization-competent form of FtsZ in a 1:1 ratio, thus inhibiting FtsZ polymerization and therefore preventing it from participating in the assembly of the Z ring. This mechanism prevents the premature segregation of damaged DNA to daughter cells during cell division. This chain is Cell division inhibitor SulA, found in Klebsiella aerogenes (Enterobacter aerogenes).